Here is a 277-residue protein sequence, read N- to C-terminus: Collectin-10 (277 aa).

Residues 1–27 form the signal peptide; sequence MNGFRVLLRSNLSMLLLLALLHFQSLG. N11 is a glycosylation site (N-linked (GlcNAc...) asparagine). Positions 41–103 are disordered; it reads THTISPGPKG…IGKKGDKGEK (63 aa). The region spanning 45–103 is the Collagen-like domain; that stretch reads SPGPKGDDGERGDTGEEGKDGKVGRQGPKGVKGELGDMGAQGNIGKSGPIGKKGDKGEK. A compositionally biased stretch (basic and acidic residues) spans 49–67; it reads KGDDGERGDTGEEGKDGKV. The 117-residue stretch at 155-271 folds into the C-type lectin domain; it reads TEEKFYYIVQ…CHLTMYFVCE (117 aa). Cystine bridges form between C176–C270 and C248–C262. An N-linked (GlcNAc...) asparagine glycan is attached at N258.

Belongs to the COLEC10/COLEC11 family. In terms of tissue distribution, expressed mainly in the liver and stomach, but also in muscles, testes, and intestines.

Its subcellular location is the secreted. It localises to the golgi apparatus. It is found in the cytoplasm. Functionally, lectin that binds to various sugars: galactose &gt; mannose = fucose &gt; N-acetylglucosamine &gt; N-acetylgalactosamine. Acts as a chemoattractant, probably involved in the regulation of cell migration. The chain is Collectin-10 (Colec10) from Mus musculus (Mouse).